Reading from the N-terminus, the 289-residue chain is tRNA-cytidine(32) 2-sulfurtransferase (289 aa).

Positions 49–54 (SGGKDS) match the PP-loop motif motif. Residues C124, C127, and C215 each coordinate [4Fe-4S] cluster.

It belongs to the TtcA family. In terms of assembly, homodimer. The cofactor is Mg(2+). [4Fe-4S] cluster serves as cofactor.

The protein resides in the cytoplasm. The catalysed reaction is cytidine(32) in tRNA + S-sulfanyl-L-cysteinyl-[cysteine desulfurase] + AH2 + ATP = 2-thiocytidine(32) in tRNA + L-cysteinyl-[cysteine desulfurase] + A + AMP + diphosphate + H(+). It functions in the pathway tRNA modification. Catalyzes the ATP-dependent 2-thiolation of cytidine in position 32 of tRNA, to form 2-thiocytidine (s(2)C32). The sulfur atoms are provided by the cysteine/cysteine desulfurase (IscS) system. The chain is tRNA-cytidine(32) 2-sulfurtransferase from Methylococcus capsulatus (strain ATCC 33009 / NCIMB 11132 / Bath).